The primary structure comprises 68 residues: SERF-like protein YDL085C-A (68 aa).

2 stretches are compositionally biased toward basic and acidic residues: residues 1-43 and 50-68; these read MARG…EILR and DARR…KTRR. Residues 1-68 form a disordered region; sequence MARGNQRDLA…EKLKAEKTRR (68 aa). Serine 37 bears the Phosphoserine mark.

The protein belongs to the SERF family.

The protein localises to the cytoplasm. Its subcellular location is the nucleus. The sequence is that of SERF-like protein YDL085C-A from Saccharomyces cerevisiae (strain ATCC 204508 / S288c) (Baker's yeast).